The chain runs to 220 residues: MKLNKYIDHTLLKQDAKKKQIDSLLSEAREYGFASVCVNPTWVEHAKKGLEGTDVKVCTVVGFPLGATTSTVKAFETKEAIQNGADEIDMVINVGALKSGDLALVESDIRAVVEASGDKLVKVIIEACLLTDQEKVLACQLAQKAGADFVKTSTGFSTGGATIADVRLMRETVGPDMGVKAAGGARSYADALTFVEAGATRIGTSAGVAILKGELADGDY.

Asp-89 acts as the Proton donor/acceptor in catalysis. Lys-151 (schiff-base intermediate with acetaldehyde) is an active-site residue. Lys-180 serves as the catalytic Proton donor/acceptor.

The protein belongs to the DeoC/FbaB aldolase family. DeoC type 1 subfamily.

The protein localises to the cytoplasm. It catalyses the reaction 2-deoxy-D-ribose 5-phosphate = D-glyceraldehyde 3-phosphate + acetaldehyde. It participates in carbohydrate degradation; 2-deoxy-D-ribose 1-phosphate degradation; D-glyceraldehyde 3-phosphate and acetaldehyde from 2-deoxy-alpha-D-ribose 1-phosphate: step 2/2. In terms of biological role, catalyzes a reversible aldol reaction between acetaldehyde and D-glyceraldehyde 3-phosphate to generate 2-deoxy-D-ribose 5-phosphate. This is Deoxyribose-phosphate aldolase from Streptococcus pneumoniae serotype 19F (strain G54).